Reading from the N-terminus, the 175-residue chain is Small ribosomal subunit protein uS7 (175 aa).

Belongs to the universal ribosomal protein uS7 family. As to quaternary structure, part of the 30S ribosomal subunit. Contacts proteins S9 and S11.

One of the primary rRNA binding proteins, it binds directly to 16S rRNA where it nucleates assembly of the head domain of the 30S subunit. Is located at the subunit interface close to the decoding center, probably blocks exit of the E-site tRNA. This chain is Small ribosomal subunit protein uS7, found in Legionella pneumophila (strain Paris).